The following is a 1108-amino-acid chain: MSITNGTSRSVSAMGHPAVERYTPGHIVCVGTHKVEVVNYLAEGGFAQIYVVKFLEYLNEFDNTASVPLKIGDVACLKRVLVQDENGLNEMRNEVEVMKKLKGAPNIVQYFDSNASRRRDGVQGFEVLLLMELCPNKSLLDYMNQRLSTKLTEAEIVKIMYDVALSISQMHYLPVSLIHRDIKIENVLVDAKNNFKLADFGSTSTCFPIVTTHQDIALLTQNIYVHTTPQYRSPEMIDLYRCLPINEKSDIWALGVFLYKLLFFTTPFEMTGQFAILHSKYEFPVNKYSSKLINLIIIMLAENPNLRPNIYQVLYHLCEILNVEVPIEDKYAEGAYNFSKYTQFQNKLQNVQLQMYQLQQKKIMQNNKLSDSEENLLNDMFLSSFEISSKLPMNASDGHAAVSRIPSQNVGQELEEEKESQSDQRKSTLSEDKSSRTTSNANSSGTANNPQEINTIQSPGIEDKSIFENKTPGELYYPSVSELDTYLDKELVKQSSDPTISEQSPRLNTQSLPQRQKSTSSYSSGGRSMKSTSYGAATIGSDEALANEKTAGINKMKQHKSNNPFPKMNVAYHSTNELSNDASNFFLEEQQQGQRYQQAQNQTGTQGNTFPDESQYQSRVEQQQQQQDQPKGPANYSQRNFYTGRDRSNKPMQLGGTIAGDSGNRRVNFQNISQNYATNSQSGYLPSQNSPAIPMVRPVISMNQQQAQQIQAQQLQAQQMQAKQQMQAKQQMQVQQQLQVQQQMQIQNANNNGTYVSDRTNHTTEDMRNAQGGEPPILAGNSANEPMHSSSKNEALLIELSPLKEDAGKQSFQDTNEPQTGGIEDAGGSGTIKGSNNNRNGVLNLSLNEMDLSRDDTGAAVSSFSSSSSSASIQQAKLSGRKGSSKRNNYSTDELGDSMVSSESIDIDLDDARRGKTAERRPLHNERGHKDQARSSDASKSNQFKSKDFSSVSTRQPRQSLDLNFQEVNLSSPTLTQEHRNKNDSPAPNSHHSYRVSPHASTAITENKRHSTGHELSTRSNGKHETHRTGSKQRHDLERYRHSKDKDSNSSITISTSTPSEMRKSFARARQSLDLERVRREAMASSASSSGGSNGKRRSFFSVFRSEK.

Position 2 is an N-acetylserine (S2). Phosphoserine is present on S10. The Protein kinase domain maps to 35 to 319; it reads VEVVNYLAEG…IYQVLYHLCE (285 aa). ATP-binding positions include 41-49 and K70; that span reads LAEGGFAQI. Catalysis depends on D181, which acts as the Proton acceptor. The segment at 405-466 is disordered; that stretch reads IPSQNVGQEL…QSPGIEDKSI (62 aa). A Phosphoserine modification is found at S407. The segment covering 419-435 has biased composition (basic and acidic residues); sequence ESQSDQRKSTLSEDKSS. Residues 436–449 show a composition bias toward low complexity; that stretch reads RTTSNANSSGTANN. T471 is modified (phosphothreonine). A compositionally biased stretch (polar residues) spans 493–513; the sequence is KQSSDPTISEQSPRLNTQSLP. Positions 493–534 are disordered; it reads KQSSDPTISEQSPRLNTQSLPQRQKSTSSYSSGGRSMKSTSY. Phosphoserine is present on S504. Low complexity predominate over residues 514-534; it reads QRQKSTSSYSSGGRSMKSTSY. Phosphoserine occurs at positions 541 and 574. The span at 590 to 629 shows a compositional bias: low complexity; the sequence is QQQGQRYQQAQNQTGTQGNTFPDESQYQSRVEQQQQQQDQ. Disordered regions lie at residues 590–663 and 765–791; these read QQQG…GDSG and EDMRNAQGGEPPILAGNSANEPMHSSS. The segment covering 781 to 791 has biased composition (polar residues); that stretch reads NSANEPMHSSS. At S801 the chain carries Phosphoserine. A disordered region spans residues 807–838; that stretch reads AGKQSFQDTNEPQTGGIEDAGGSGTIKGSNNN. The span at 810 to 819 shows a compositional bias: polar residues; that stretch reads QSFQDTNEPQ. At S846 the chain carries Phosphoserine. Positions 858–1108 are disordered; sequence GAAVSSFSSS…SFFSVFRSEK (251 aa). Over residues 859–872 the composition is skewed to low complexity; the sequence is AAVSSFSSSSSSAS. Over residues 910–934 the composition is skewed to basic and acidic residues; sequence DDARRGKTAERRPLHNERGHKDQAR. Positions 935–976 are enriched in polar residues; sequence SSDASKSNQFKSKDFSSVSTRQPRQSLDLNFQEVNLSSPTLT. Phosphoserine is present on residues S953 and S960. A compositionally biased stretch (basic and acidic residues) spans 1006–1048; the sequence is ENKRHSTGHELSTRSNGKHETHRTGSKQRHDLERYRHSKDKDS. Glycyl lysine isopeptide (Lys-Gly) (interchain with G-Cter in ubiquitin) cross-links involve residues K1008 and K1046. At S1048 the chain carries Phosphoserine. Residues 1049–1060 show a composition bias toward low complexity; the sequence is NSSITISTSTPS. The span at 1071-1082 shows a compositional bias: basic and acidic residues; it reads QSLDLERVRREA. S1072 is modified (phosphoserine).

This sequence belongs to the protein kinase superfamily. Ser/Thr protein kinase family.

The catalysed reaction is L-seryl-[protein] + ATP = O-phospho-L-seryl-[protein] + ADP + H(+). It carries out the reaction L-threonyl-[protein] + ATP = O-phospho-L-threonyl-[protein] + ADP + H(+). Phosphorylates SCD5. This is Serine/threonine-protein kinase AKL1 (AKL1) from Saccharomyces cerevisiae (strain ATCC 204508 / S288c) (Baker's yeast).